The chain runs to 158 residues: Crossover junction endodeoxyribonuclease RuvC (158 aa).

Residues D7, E67, and D140 contribute to the active site. D7, E67, and D140 together coordinate Mg(2+).

This sequence belongs to the RuvC family. Homodimer which binds Holliday junction (HJ) DNA. The HJ becomes 2-fold symmetrical on binding to RuvC with unstacked arms; it has a different conformation from HJ DNA in complex with RuvA. In the full resolvosome a probable DNA-RuvA(4)-RuvB(12)-RuvC(2) complex forms which resolves the HJ. Mg(2+) serves as cofactor.

Its subcellular location is the cytoplasm. It catalyses the reaction Endonucleolytic cleavage at a junction such as a reciprocal single-stranded crossover between two homologous DNA duplexes (Holliday junction).. In terms of biological role, the RuvA-RuvB-RuvC complex processes Holliday junction (HJ) DNA during genetic recombination and DNA repair. Endonuclease that resolves HJ intermediates. Cleaves cruciform DNA by making single-stranded nicks across the HJ at symmetrical positions within the homologous arms, yielding a 5'-phosphate and a 3'-hydroxyl group; requires a central core of homology in the junction. The consensus cleavage sequence is 5'-(A/T)TT(C/G)-3'. Cleavage occurs on the 3'-side of the TT dinucleotide at the point of strand exchange. HJ branch migration catalyzed by RuvA-RuvB allows RuvC to scan DNA until it finds its consensus sequence, where it cleaves and resolves the cruciform DNA. The chain is Crossover junction endodeoxyribonuclease RuvC from Dictyoglomus thermophilum (strain ATCC 35947 / DSM 3960 / H-6-12).